The primary structure comprises 685 residues: Galactocerebrosidase (685 aa).

The signal sequence occupies residues 1-42 (MAEWLLSASWQRRAKAMTAAAGSAGRAAVPLLLCALLAPGGA). Threonine 109 is a binding site for substrate. An N-linked (GlcNAc...) asparagine glycan is attached at asparagine 143. Substrate contacts are provided by tryptophan 151 and asparagine 197. Glutamate 198 serves as the catalytic Proton donor/acceptor. Glutamate 274 (nucleophile) is an active-site residue. An intrachain disulfide couples cysteine 287 to cysteine 394. N-linked (GlcNAc...) asparagine glycosylation is present at asparagine 379. Residue arginine 396 participates in substrate binding. Residues asparagine 403, asparagine 556, asparagine 559, and asparagine 602 are each glycosylated (N-linked (GlcNAc...) asparagine).

It belongs to the glycosyl hydrolase 59 family. As to expression, detected in urine. Detected in testis, brain and placenta (at protein level). Detected in kidney and liver.

The protein resides in the lysosome. It catalyses the reaction a beta-D-galactosyl-(1&lt;-&gt;1')-N-acylsphing-4-enine + H2O = an N-acylsphing-4-enine + D-galactose. It carries out the reaction beta-D-galactosyl-(1&lt;-&gt;1)-sphing-4-enine + H2O = sphing-4-enine + D-galactose. The enzyme catalyses a D-galactosylceramide + H2O = an N-acyl-sphingoid base + D-galactose. Hydrolyzes the galactose ester bonds of glycolipids such as galactosylceramide and galactosylsphingosine. Enzyme with very low activity responsible for the lysosomal catabolism of galactosylceramide, a major lipid in myelin, kidney and epithelial cells of small intestine and colon. The protein is Galactocerebrosidase of Homo sapiens (Human).